The following is a 467-amino-acid chain: Membrane-bound acylglycerophosphatidylinositol O-acyltransferase mboat7 (467 aa).

Residues 1–5 lie on the Cytoplasmic side of the membrane; sequence MSPDE. The helical transmembrane segment at 6–22 threads the bilayer; that stretch reads LVYLGILAATIPVGFLF. The Lumenal portion of the chain corresponds to 23 to 33; sequence RYLSPPVKQGA. Residues 34–57 traverse the membrane as a helical segment; sequence ALLLGLIISIATCGIHTLHSLCTV. Topologically, residues 58–73 are cytoplasmic; sequence LGTWIIIKINWRSAPA. The helical transmembrane segment at 74–93 threads the bilayer; the sequence is LSLAWTFLYLLFFRLVTWFG. Over 94–193 the chain is Lumenal; it reads LPQPTPFANA…LPGKEPCLQR (100 aa). A helical membrane pass occupies residues 194–211; the sequence is LKMVPVYGLLFIAVNSVF. At 212-230 the chain is on the cytoplasmic side; it reads PLSYVRTEDFLEHNYFYRF. A helical transmembrane segment spans residues 231 to 260; it reads FYMVAIFFVFRMRFYSAWCGAEAGCISAGL. Topologically, residues 261–421 are lumenal; that stretch reads GCYPQGALSK…LKASDTISYW (161 aa). Asparagine 316 carries N-linked (GlcNAc...) asparagine glycosylation. A helical transmembrane segment spans residues 422-442; sequence SSIYFVIHIIAIVCIAVGQFM. Over 443–467 the chain is Cytoplasmic; sequence KGGRKREKRERGEGEKEDAVREKAE. The segment at 447 to 467 is disordered; that stretch reads KREKRERGEGEKEDAVREKAE. Over residues 451-467 the composition is skewed to basic and acidic residues; it reads RERGEGEKEDAVREKAE.

It belongs to the membrane-bound acyltransferase family.

It localises to the endoplasmic reticulum membrane. It carries out the reaction a 1-acyl-sn-glycero-3-phospho-(1D-myo-inositol) + (5Z,8Z,11Z,14Z)-eicosatetraenoyl-CoA = a 1-acyl-2-(5Z,8Z,11Z,14Z-eicosatetraenoyl)-sn-glycero-3-phospho-(1D-myo-inositol) + CoA. The enzyme catalyses (5Z,8Z,11Z,14Z)-eicosatetraenoyl-CoA + 1-hexadecanoyl-sn-glycero-3-phosphocholine = 1-hexadecanoyl-2-(5Z,8Z,11Z,14Z-eicosatetraenoyl)-sn-glycero-3-phosphocholine + CoA. The catalysed reaction is a 1-acyl-sn-glycero-3-phospho-(1D-myo-inositol) + an acyl-CoA = a 1,2-diacyl-sn-glycero-3-phospho-(1D-myo-inositol) + CoA. It catalyses the reaction 1-octadecanoyl-sn-glycero-3-phospho-(1D-myo-inositol) + (5Z,8Z,11Z,14Z)-eicosatetraenoyl-CoA = 1-octadecanoyl-2-(5Z,8Z,11Z,14Z-eicosatetraenoyl)-sn-glycero-3-phospho-(1D-myo-inositol) + CoA. It functions in the pathway lipid metabolism; phospholipid metabolism. Acyltransferase which catalyzes the transfer of an acyl group from an acyl-CoA to a lysophosphatidylinositol (1-acylglycerophosphatidylinositol or LPI) leading to the production of a phosphatidylinositol (1,2-diacyl-sn-glycero-3-phosphoinositol or PI) and participates in the reacylation step of the phospholipid remodeling pathway also known as the Lands cycle. Prefers arachidonoyl-CoA as the acyl donor, thus contributing to the regulation of free levels arachidonic acid in cell. The polypeptide is Membrane-bound acylglycerophosphatidylinositol O-acyltransferase mboat7 (mboat7) (Danio rerio (Zebrafish)).